Here is a 257-residue protein sequence, read N- to C-terminus: Pyridoxine 5'-phosphate synthase (257 aa).

Position 12 (Asn12) interacts with 3-amino-2-oxopropyl phosphate. Residue 14–15 (DH) coordinates 1-deoxy-D-xylulose 5-phosphate. Arg23 is a binding site for 3-amino-2-oxopropyl phosphate. Catalysis depends on His48, which acts as the Proton acceptor. 2 residues coordinate 1-deoxy-D-xylulose 5-phosphate: Arg50 and His55. Glu75 acts as the Proton acceptor in catalysis. Residue Thr105 participates in 1-deoxy-D-xylulose 5-phosphate binding. The Proton donor role is filled by His199. 3-amino-2-oxopropyl phosphate contacts are provided by residues Gly200 and 221–222 (GH).

Belongs to the PNP synthase family. Homooctamer; tetramer of dimers.

It localises to the cytoplasm. The catalysed reaction is 3-amino-2-oxopropyl phosphate + 1-deoxy-D-xylulose 5-phosphate = pyridoxine 5'-phosphate + phosphate + 2 H2O + H(+). Its pathway is cofactor biosynthesis; pyridoxine 5'-phosphate biosynthesis; pyridoxine 5'-phosphate from D-erythrose 4-phosphate: step 5/5. Functionally, catalyzes the complicated ring closure reaction between the two acyclic compounds 1-deoxy-D-xylulose-5-phosphate (DXP) and 3-amino-2-oxopropyl phosphate (1-amino-acetone-3-phosphate or AAP) to form pyridoxine 5'-phosphate (PNP) and inorganic phosphate. This is Pyridoxine 5'-phosphate synthase from Xanthobacter autotrophicus (strain ATCC BAA-1158 / Py2).